The primary structure comprises 143 residues: Putative pre-16S rRNA nuclease (143 aa).

It belongs to the YqgF nuclease family.

The protein resides in the cytoplasm. Functionally, could be a nuclease involved in processing of the 5'-end of pre-16S rRNA. The sequence is that of Putative pre-16S rRNA nuclease from Agathobacter rectalis (strain ATCC 33656 / DSM 3377 / JCM 17463 / KCTC 5835 / VPI 0990) (Eubacterium rectale).